A 173-amino-acid polypeptide reads, in one-letter code: dCTP deaminase, dUMP-forming (173 aa).

DCTP-binding positions include 93–98, Asp-111, 119–121, and Gln-138; these read RSSIGR and TLE. Glu-121 serves as the catalytic Proton donor/acceptor.

It belongs to the dCTP deaminase family. Homotrimer.

It carries out the reaction dCTP + 2 H2O = dUMP + NH4(+) + diphosphate. Its pathway is pyrimidine metabolism; dUMP biosynthesis; dUMP from dCTP: step 1/1. Bifunctional enzyme that catalyzes both the deamination of dCTP to dUTP and the hydrolysis of dUTP to dUMP without releasing the toxic dUTP intermediate. This is dCTP deaminase, dUMP-forming from Leptospira borgpetersenii serovar Hardjo-bovis (strain JB197).